The following is an 899-amino-acid chain: Protein translocase subunit SecA (899 aa).

ATP-binding positions include Q87, 105 to 109, and D516; that span reads GEGKT. Zn(2+)-binding residues include C884, C886, C895, and H896.

This sequence belongs to the SecA family. Monomer and homodimer. Part of the essential Sec protein translocation apparatus which comprises SecA, SecYEG and auxiliary proteins SecDF. Other proteins may also be involved. Requires Zn(2+) as cofactor.

The protein localises to the cell inner membrane. The protein resides in the cytoplasm. The catalysed reaction is ATP + H2O + cellular proteinSide 1 = ADP + phosphate + cellular proteinSide 2.. In terms of biological role, part of the Sec protein translocase complex. Interacts with the SecYEG preprotein conducting channel. Has a central role in coupling the hydrolysis of ATP to the transfer of proteins into and across the cell membrane, serving as an ATP-driven molecular motor driving the stepwise translocation of polypeptide chains across the membrane. This chain is Protein translocase subunit SecA, found in Borreliella burgdorferi (strain ZS7) (Borrelia burgdorferi).